Reading from the N-terminus, the 115-residue chain is MKVAVIILSILVLAAASESIEEYREDFSRPNAMERSANDWIPTAPSAVERSADFAVEELERATCAGQDKPCKETCDCCGERGECVCALSYEGKYRCICRQGYVWIAWYKLASCKK.

Positions 1-17 are cleaved as a signal peptide; it reads MKVAVIILSILVLAAAS. Positions 18–61 are excised as a propeptide; the sequence is ESIEEYREDFSRPNAMERSANDWIPTAPSAVERSADFAVEELER. 5 disulfides stabilise this stretch: Cys64/Cys78, Cys71/Cys84, Cys75/Cys113, Cys77/Cys98, and Cys86/Cys96. Residue Lys115 is a propeptide.

Belongs to the neurotoxin 03 (Tx2) family. 04 subfamily. As to expression, expressed by the venom gland.

It localises to the secreted. Its function is as follows. Blocks voltage-gated sodium channels (Nav). The sequence is that of U2-ctenitoxin-Pn1b from Phoneutria nigriventer (Brazilian armed spider).